Consider the following 408-residue polypeptide: Multifunctional CCA protein (408 aa).

ATP-binding residues include Gly-8 and Arg-11. CTP contacts are provided by Gly-8 and Arg-11. Residues Asp-21 and Asp-23 each coordinate Mg(2+). Arg-91, Arg-137, and Arg-140 together coordinate ATP. CTP is bound by residues Arg-91, Arg-137, and Arg-140. In terms of domain architecture, HD spans 228 to 329 (TGVHVLSVLE…LELLQSFDVY (102 aa)).

This sequence belongs to the tRNA nucleotidyltransferase/poly(A) polymerase family. Bacterial CCA-adding enzyme type 1 subfamily. As to quaternary structure, monomer. Can also form homodimers and oligomers. Mg(2+) serves as cofactor. Ni(2+) is required as a cofactor.

It catalyses the reaction a tRNA precursor + 2 CTP + ATP = a tRNA with a 3' CCA end + 3 diphosphate. It carries out the reaction a tRNA with a 3' CCA end + 2 CTP + ATP = a tRNA with a 3' CCACCA end + 3 diphosphate. In terms of biological role, catalyzes the addition and repair of the essential 3'-terminal CCA sequence in tRNAs without using a nucleic acid template. Adds these three nucleotides in the order of C, C, and A to the tRNA nucleotide-73, using CTP and ATP as substrates and producing inorganic pyrophosphate. tRNA 3'-terminal CCA addition is required both for tRNA processing and repair. Also involved in tRNA surveillance by mediating tandem CCA addition to generate a CCACCA at the 3' terminus of unstable tRNAs. While stable tRNAs receive only 3'-terminal CCA, unstable tRNAs are marked with CCACCA and rapidly degraded. This chain is Multifunctional CCA protein, found in Pseudomonas syringae pv. syringae (strain B728a).